Reading from the N-terminus, the 209-residue chain is MRDPVEFYNSALVPMVVEQSSRGERAFDIYSRLLRERIIFLTGPVEDYSASLIVAQLLFLEAENPKKEISFYINSPGGVVTSGLSIYDTMQFIRCPVATLCVGQAASMGSLLLAAGEPGHRFALPNARIMVHQPSGGFQGQATDILIHAREIEALKRRLNEIYVKHTGRDYDTIELGLERDNFMTADAAREWGLIDEVLQKRAEASPAA.

The active-site Nucleophile is Ser107. His132 is an active-site residue.

Belongs to the peptidase S14 family. In terms of assembly, fourteen ClpP subunits assemble into 2 heptameric rings which stack back to back to give a disk-like structure with a central cavity, resembling the structure of eukaryotic proteasomes.

It localises to the cytoplasm. It catalyses the reaction Hydrolysis of proteins to small peptides in the presence of ATP and magnesium. alpha-casein is the usual test substrate. In the absence of ATP, only oligopeptides shorter than five residues are hydrolyzed (such as succinyl-Leu-Tyr-|-NHMec, and Leu-Tyr-Leu-|-Tyr-Trp, in which cleavage of the -Tyr-|-Leu- and -Tyr-|-Trp bonds also occurs).. In terms of biological role, cleaves peptides in various proteins in a process that requires ATP hydrolysis. Has a chymotrypsin-like activity. Plays a major role in the degradation of misfolded proteins. This Methylobacterium nodulans (strain LMG 21967 / CNCM I-2342 / ORS 2060) protein is ATP-dependent Clp protease proteolytic subunit.